A 235-amino-acid polypeptide reads, in one-letter code: Zorya protein ZorB (235 aa).

A helical membrane pass occupies residues 25–44 (LMAGLMMVFMFISIAYMHYV). The region spanning 87–225 (QTLEVRFKSP…RVTFKVVTNA (139 aa)) is the OmpA-like domain.

It belongs to the MotB family.

It localises to the cell inner membrane. Component of antiviral defense system Zorya type II, composed of ZorA, ZorB and ZorE. Expression of Zorya type II in E.coli (strain MG1655) confers resistance to phages SECphi7 and T7. While most T7 infected Zorya-containing cells undergo abortive infection, a minority produce viable phage progeny. These eventually accumulate to a high multiplicity of infection, leading to culture collapse by 170 minutes after initial infection. ZorA and ZorB probably assemble in the cell inner membrane and exert their effect there. The polypeptide is Zorya protein ZorB (Escherichia coli (strain ATCC 8739 / DSM 1576 / NBRC 3972 / NCIMB 8545 / WDCM 00012 / Crooks)).